Consider the following 371-residue polypeptide: 4-hydroxy-3-methylbut-2-en-1-yl diphosphate synthase (flavodoxin) (371 aa).

[4Fe-4S] cluster-binding residues include Cys269, Cys272, Cys304, and Glu311.

It belongs to the IspG family. It depends on [4Fe-4S] cluster as a cofactor.

The catalysed reaction is (2E)-4-hydroxy-3-methylbut-2-enyl diphosphate + oxidized [flavodoxin] + H2O + 2 H(+) = 2-C-methyl-D-erythritol 2,4-cyclic diphosphate + reduced [flavodoxin]. It functions in the pathway isoprenoid biosynthesis; isopentenyl diphosphate biosynthesis via DXP pathway; isopentenyl diphosphate from 1-deoxy-D-xylulose 5-phosphate: step 5/6. Its function is as follows. Converts 2C-methyl-D-erythritol 2,4-cyclodiphosphate (ME-2,4cPP) into 1-hydroxy-2-methyl-2-(E)-butenyl 4-diphosphate. The chain is 4-hydroxy-3-methylbut-2-en-1-yl diphosphate synthase (flavodoxin) from Acinetobacter baumannii (strain AB307-0294).